The sequence spans 1240 residues: RNA-directed RNA polymerase VP2 (1240 aa).

In terms of domain architecture, RdRp catalytic spans 516 to 764 (LVANYINKHM…KLYALFGARI (249 aa)).

This sequence belongs to the reoviridae RNA-directed RNA polymerase family.

It is found in the virion. The catalysed reaction is RNA(n) + a ribonucleoside 5'-triphosphate = RNA(n+1) + diphosphate. Its function is as follows. RNA-directed RNA polymerase that is involved in transcription and genome replication. Following infection, it catalyzes the synthesis of fully conservative plus strands. After core assembly, which consists in recruitment of one capped plus-strand for each genomic segments and polymerase complexes, the polymerase switches mode and catalyzes the synthesis of complementary minus-strands. This Oncorhynchus keta (Chum salmon) protein is RNA-directed RNA polymerase VP2 (S2).